The primary structure comprises 166 residues: NAD(P)H-quinone oxidoreductase subunit I, chloroplastic (166 aa).

4Fe-4S ferredoxin-type domains lie at Gly-55–Lys-84 and Leu-95–Glu-124. [4Fe-4S] cluster-binding residues include Cys-64, Cys-67, Cys-70, Cys-74, Cys-104, Cys-107, Cys-110, and Cys-114.

It belongs to the complex I 23 kDa subunit family. As to quaternary structure, NDH is composed of at least 16 different subunits, 5 of which are encoded in the nucleus. [4Fe-4S] cluster is required as a cofactor.

The protein localises to the plastid. Its subcellular location is the chloroplast thylakoid membrane. It catalyses the reaction a plastoquinone + NADH + (n+1) H(+)(in) = a plastoquinol + NAD(+) + n H(+)(out). It carries out the reaction a plastoquinone + NADPH + (n+1) H(+)(in) = a plastoquinol + NADP(+) + n H(+)(out). In terms of biological role, NDH shuttles electrons from NAD(P)H:plastoquinone, via FMN and iron-sulfur (Fe-S) centers, to quinones in the photosynthetic chain and possibly in a chloroplast respiratory chain. The immediate electron acceptor for the enzyme in this species is believed to be plastoquinone. Couples the redox reaction to proton translocation, and thus conserves the redox energy in a proton gradient. This chain is NAD(P)H-quinone oxidoreductase subunit I, chloroplastic, found in Pentanema britannica (British yellowhead).